A 708-amino-acid polypeptide reads, in one-letter code: Exocyst complex component 5 (708 aa).

Residue alanine 2 is modified to N-acetylalanine. Positions 40–101 (KRLLEEFVNH…AFQHFQELDE (62 aa)) form a coiled coil. Phosphothreonine is present on residues threonine 122, threonine 395, and threonine 405. Serine 412 bears the Phosphoserine mark.

Belongs to the SEC10 family. The exocyst complex is composed of EXOC1, EXOC2, EXOC3, EXOC4, EXOC5, EXOC6, EXOC7 and EXOC8. Interacts with EXOC3L1. As to expression, ubiquitous.

The protein resides in the cytoplasm. It is found in the midbody. In terms of biological role, component of the exocyst complex involved in the docking of exocytic vesicles with fusion sites on the plasma membrane. The polypeptide is Exocyst complex component 5 (EXOC5) (Homo sapiens (Human)).